The primary structure comprises 1040 residues: Multidrug resistance protein MdtB (1040 aa).

The next 12 helical transmembrane spans lie at 16–36, 347–367, 369–389, 396–416, 440–460, 472–492, 537–557, 863–883, 888–908, 911–931, 968–988, and 998–1018; these read FIMRPVATTLLMVAILLAGII, LMMAIALVVMIIYLFLRNIPA, IIPGVAVPLSLIGTFAVMVFL, LTLMALTIATGFVVDDAIVVI, IGFTIISLTFSLIAVLIPLLF, FAITLAVAILISAVVSLTLTP, WLTLSVALSTLLLSVLLWVFI, LGSTVWLIVAAVVAMYIVLGI, FIHPITILSTLPTAGVGALLA, IAGSELDVIAIIGIILLIGIV, ILMTTLAALLGALPLMLSTGV, and IGMVGGLVVSQVLTLFTTPVI.

It belongs to the resistance-nodulation-cell division (RND) (TC 2.A.6) family. MdtB subfamily. Part of a tripartite efflux system composed of MdtA, MdtB and MdtC. MdtB forms a heteromultimer with MdtC.

The protein resides in the cell inner membrane. This is Multidrug resistance protein MdtB from Shigella boydii serotype 18 (strain CDC 3083-94 / BS512).